The following is a 247-amino-acid chain: DNA polymerase sliding clamp 1 (247 aa).

It belongs to the PCNA family. In terms of assembly, homotrimer. The subunits circularize to form a toroid; DNA passes through its center. Replication factor C (RFC) is required to load the toroid on the DNA.

Sliding clamp subunit that acts as a moving platform for DNA processing. Responsible for tethering the catalytic subunit of DNA polymerase and other proteins to DNA during high-speed replication. This chain is DNA polymerase sliding clamp 1, found in Sulfolobus acidocaldarius (strain ATCC 33909 / DSM 639 / JCM 8929 / NBRC 15157 / NCIMB 11770).